A 65-amino-acid chain; its full sequence is Large ribosomal subunit protein bL35 (65 aa).

The protein belongs to the bacterial ribosomal protein bL35 family.

The chain is Large ribosomal subunit protein bL35 from Prochlorococcus marinus (strain NATL1A).